A 160-amino-acid chain; its full sequence is Tic20 family protein (160 aa).

4 helical membrane passes run 13-33 (FFSA…GGFL), 53-73 (FYYQ…MAVV), 87-107 (MQAI…AYVI), and 122-142 (NFAF…SVLG).

The protein belongs to the Tic20 family.

It localises to the cell membrane. This is Tic20 family protein from Synechocystis sp. (strain ATCC 27184 / PCC 6803 / Kazusa).